A 392-amino-acid chain; its full sequence is Alaserpin (392 aa).

A signal peptide spans 1-16; sequence MKIIMCIFGLAALAMA. Asn-85 carries N-linked (GlcNAc...) asparagine glycosylation.

Belongs to the serpin family. In terms of tissue distribution, hemolymph.

It localises to the secreted. The protein localises to the extracellular space. Its function is as follows. Inhibits elastase. This is Alaserpin from Manduca sexta (Tobacco hawkmoth).